The sequence spans 545 residues: Esterase-5B (545 aa).

Residues 1 to 19 form the signal peptide; that stretch reads MYCAKLILLLGCFWISSSA. An intrachain disulfide couples C84 to C103. N113 carries an N-linked (GlcNAc...) asparagine glycan. S207 acts as the Acyl-ester intermediate in catalysis. The cysteines at positions 259 and 271 are disulfide-linked. The N-linked (GlcNAc...) asparagine glycan is linked to N421. H467 functions as the Charge relay system in the catalytic mechanism. N-linked (GlcNAc...) asparagine glycosylation is present at N507. The cysteines at positions 515 and 536 are disulfide-linked.

The protein belongs to the type-B carboxylesterase/lipase family. Homodimer.

It localises to the secreted. The enzyme catalyses a carboxylic ester + H2O = an alcohol + a carboxylate + H(+). This chain is Esterase-5B (Est-5B), found in Drosophila persimilis (Fruit fly).